The chain runs to 1463 residues: DNA-directed RNA polymerase subunit beta'' (1463 aa).

Zn(2+) is bound by residues cysteine 239, cysteine 312, cysteine 319, and cysteine 322. Disordered stretches follow at residues 836 to 869 (TFTG…ETRM) and 987 to 1007 (TNRS…AQAR). The span at 860 to 869 (AANSSHETRM) shows a compositional bias: polar residues. The segment covering 987 to 996 (TNRSKTRRNA) has biased composition (basic residues). Residues 997–1007 (SGKTQVKAQAR) show a composition bias toward polar residues.

It belongs to the RNA polymerase beta' chain family. RpoC2 subfamily. In plastids the minimal PEP RNA polymerase catalytic core is composed of four subunits: alpha, beta, beta', and beta''. When a (nuclear-encoded) sigma factor is associated with the core the holoenzyme is formed, which can initiate transcription. Zn(2+) serves as cofactor.

It localises to the plastid. The protein resides in the chloroplast. The catalysed reaction is RNA(n) + a ribonucleoside 5'-triphosphate = RNA(n+1) + diphosphate. DNA-dependent RNA polymerase catalyzes the transcription of DNA into RNA using the four ribonucleoside triphosphates as substrates. This is DNA-directed RNA polymerase subunit beta'' from Nephroselmis olivacea (Green alga).